The chain runs to 620 residues: Glutathione-regulated potassium-efflux system protein KefC (620 aa).

The Periplasmic portion of the chain corresponds to 1–3 (MDS). Residues 4 to 24 (HTLVQALIYLGSAALIVPIAV) form a helical membrane-spanning segment. Arg-25 is a topological domain (cytoplasmic). The chain crosses the membrane as a helical span at residues 26-46 (LGLGSVLGYLIAGCIIGPWGL). The Periplasmic portion of the chain corresponds to 47–53 (RLVTDAE). A helical membrane pass occupies residues 54–74 (SILHFAEIGVVLMLFIIGLEL). Topologically, residues 75–89 (DPQRLWKLRAAVFGG) are cytoplasmic. The chain crosses the membrane as a helical span at residues 90–110 (GALQMVICGGLLGLFCMLLGL). At 111–113 (RWQ) the chain is on the periplasmic side. A helical transmembrane segment spans residues 114–134 (VAELIGMTLALSSTAIAMQAM). Residues 135–148 (NERNLMVTQMGRSA) lie on the Cytoplasmic side of the membrane. A helical membrane pass occupies residues 149–169 (FAVLLFQDIAAIPLVAMIPLL). At 170–177 (AASSASTT) the chain is on the periplasmic side. A helical membrane pass occupies residues 178-198 (MGAFALSALKVAGALVLVVLL). Residues 199 to 213 (GRYVTRPALRFVARS) lie on the Cytoplasmic side of the membrane. Residues 214–233 (GLREVFSAVALFLVFGFGLL) traverse the membrane as a helical segment. Residues 234–236 (LEE) are Periplasmic-facing. Residues 237-254 (VGLSMAMGAFLAGVLLAS) form a helical membrane-spanning segment. The Cytoplasmic portion of the chain corresponds to 255–269 (SEYRHALESDIEPFK). Residues 270 to 290 (GLLLGLFFIGVGMSIDFGTLI) traverse the membrane as a helical segment. Over 291–293 (ENP) the chain is Periplasmic. A helical membrane pass occupies residues 294–314 (LRIVILLLGFLIIKIAMLWLI). Residues 315–326 (ARPLQVPNKQRR) are Cytoplasmic-facing. The chain crosses the membrane as a helical span at residues 327–347 (WFAVLLGQGSEFAFVVFGAAQ). Residues 348–358 (MANVLEPEWAK) are Periplasmic-facing. The helical transmembrane segment at 359-379 (SLTLAVALSMAATPILLVILN) threads the bilayer. Residues 380-620 (RLEQSSTEEA…ADEPETKPSS (241 aa)) are Cytoplasmic-facing. One can recognise an RCK N-terminal domain in the interval 399-518 (QPRVIIAGFG…AGVEKPERET (120 aa)). Residues 597-620 (GWQGTEEGKHTGNMADEPETKPSS) form a disordered region.

Belongs to the monovalent cation:proton antiporter 2 (CPA2) transporter (TC 2.A.37) family. KefC subfamily. In terms of assembly, homodimer. Interacts with the regulatory subunit KefF.

It localises to the cell inner membrane. Its function is as follows. Pore-forming subunit of a potassium efflux system that confers protection against electrophiles. Catalyzes K(+)/H(+) antiport. The protein is Glutathione-regulated potassium-efflux system protein KefC of Shigella flexneri.